The following is a 194-amino-acid chain: MPKVGMREIRRAQLIDATLRSIDEAGLPGTTLASVAQRANISTGIVSHYFGDKDGLLEATMRHVLRDLWSATTRRRVAARKDPRSRLRAVVAANFDDTQVSAPVMKTWLAFWSQSMHDPMLKRLQHVNTRRLHSNLCAEFAKALPLAKAREAASGLAALIDGLWLRGALAGGPIDTRAALKLAHDYIDLLLASD.

In terms of domain architecture, HTH tetR-type spans 8–68; it reads EIRRAQLIDA…ATMRHVLRDL (61 aa). Residues 31–50 constitute a DNA-binding region (H-T-H motif); sequence TLASVAQRANISTGIVSHYF.

It functions in the pathway amine and polyamine biosynthesis; betaine biosynthesis via choline pathway [regulation]. Repressor involved in the biosynthesis of the osmoprotectant glycine betaine. It represses transcription of the choline transporter BetT and the genes of BetAB involved in the synthesis of glycine betaine. The protein is HTH-type transcriptional regulator BetI of Burkholderia cenocepacia (strain HI2424).